We begin with the raw amino-acid sequence, 254 residues long: Caffeoyl-CoA O-methyltransferase (254 aa).

The interval 1-25 (MATTNVEENKQTQEQQPKEIKHQEV) is disordered. The span at 7-25 (EENKQTQEQQPKEIKHQEV) shows a compositional bias: basic and acidic residues. K28 contacts substrate. Residues T70, E92, 94-95 (GV), S100, D118, and A147 each bind S-adenosyl-L-methionine. D170 contributes to the substrate binding site. A divalent metal cation is bound at residue D170. An S-adenosyl-L-methionine-binding site is contributed by D172. A divalent metal cation contacts are provided by D196 and N197. A substrate-binding site is contributed by N201.

Belongs to the class I-like SAM-binding methyltransferase superfamily. Cation-dependent O-methyltransferase family. CCoAMT subfamily. It depends on a divalent metal cation as a cofactor.

It catalyses the reaction (E)-caffeoyl-CoA + S-adenosyl-L-methionine = (E)-feruloyl-CoA + S-adenosyl-L-homocysteine + H(+). It functions in the pathway aromatic compound metabolism; phenylpropanoid biosynthesis. Functionally, methylates caffeoyl-CoA to feruloyl-CoA and 5-hydroxyferuloyl-CoA to sinapoyl-CoA. Plays a role in the synthesis of feruloylated polysaccharides. Involved in the reinforcement of the plant cell wall. Also involved in the responding to wounding or pathogen challenge by the increased formation of cell wall-bound ferulic acid polymers. In Mesembryanthemum crystallinum (Common ice plant), this protein is Caffeoyl-CoA O-methyltransferase.